Consider the following 2590-residue polypeptide: DNA polymerase theta (2590 aa).

Residues 1 to 12 show a composition bias toward basic residues; that stretch reads MNLLRRSGKRRR. Residues 1 to 33 form a disordered region; that stretch reads MNLLRRSGKRRRSESGSDSFSGSGGDSSASPQF. The span at 16 to 30 shows a compositional bias: low complexity; that stretch reads GSDSFSGSGGDSSAS. ATP-binding positions include glutamine 96 and 115–122; that span reads APTSAGKT. Residues 102–286 form the Helicase ATP-binding domain; it reads LGQVLEGKNL…WLNAELYHTD (185 aa). The tract at residues 102 to 554 is helicase activity; it reads LGQVLEGKNL…STSQDMHTYA (453 aa). Positions 216–219 match the DEAH box motif; that stretch reads DELH. The Helicase C-terminal domain occupies 321–554; sequence GDEDHVVSLC…STSQDMHTYA (234 aa). The interval 847–894 is interaction with RAD51; it reads DEEEEAVEERRNMRTIWVTGRKGLTEREAAALIVEEARMILQQDLVEM. N6-acetyllysine is present on lysine 990. The interval 1034-1060 is disordered; sequence KMSRSFRSWKRRKHLKRSRDSSPLKDS. Residues 1040 to 1050 are compositionally biased toward basic residues; that stretch reads RSWKRRKHLKR. Phosphoserine; by PLK1 is present on residues serine 1289, serine 1482, serine 1486, serine 1488, serine 1493, serine 1555, and serine 1563. Residues 1594–1622 are disordered; that stretch reads SDPVLDEHHQGDQDGGDQDERAEKSKLTG. The span at 1598–1619 shows a compositional bias: basic and acidic residues; that stretch reads LDEHHQGDQDGGDQDERAEKSK. 2 positions are modified to phosphoserine; by PLK1: serine 1628 and serine 1635. A Phosphothreonine; by PLK1 modification is found at threonine 1755. The disordered stretch occupies residues 1777–1797; it reads PSDIKNHDLSPGSRNGFKDNS. The tract at residues 2097 to 2584 is DNA polymerase activity; it reads AECESQKHIM…KVKIGASWGE (488 aa). Loop stretches follow at residues 2142 to 2177 and 2257 to 2322; these read KLPP…GRQF and EIKM…VPFP. Mg(2+) contacts are provided by aspartate 2330 and tyrosine 2331. Residues 2491–2535 are loop 3; that stretch reads QLETFHSTFKSHGHREGMLQSDQTGLSRKRKLQGMFCPIRGGFFI. Aspartate 2540 provides a ligand contact to Mg(2+).

It belongs to the DNA polymerase type-A family. In terms of assembly, homomultimer; forms homodimers and homotetramers. Interacts with RAD51. Interacts with ORC2 and ORC4. Interacts with RHNO1; interaction takes place during mitosis and promotes POLQ recruitment to DNA damage sites. Interacts (when phosphorylated) with TOPBP1 (via BRCT domains 7 and 8); promoting POLQ recruitment to DNA damage sites. The cofactor is Mg(2+). Post-translationally, phosphorylated by PLK1; promoting interaction with TOPBP1 and recruitment to DNA damage sites. As to expression, highly expressed in testis.

It is found in the nucleus. It localises to the chromosome. It catalyses the reaction DNA(n) + a 2'-deoxyribonucleoside 5'-triphosphate = DNA(n+1) + diphosphate. It carries out the reaction ATP + H2O = ADP + phosphate + H(+). With respect to regulation, specifically inhibited by the antibiotic novobiocin. The polymerase activity is specifically inhibited by the small molecule ART558. Novobiocin and ART558 confer specific killing of BRCA1/2-deficient cells and synergize with the poly [ADP-ribose] polymerase (PARP) inhibitor olaparib. Functionally, low-fidelity DNA polymerase with a helicase activity that promotes microhomology-mediated end-joining (MMEJ), an alternative non-homologous end-joining (NHEJ) machinery required to repair double-strand breaks in DNA during mitosis. MMEJ is an error-prone repair pathway that produces deletions of sequences from the strand being repaired and promotes genomic rearrangements, such as telomere fusions, some of them leading to cellular transformation. MMEJ is required during mitosis to repair persistent double-strand breaks that originate in S-phase. Although error-prone, MMEJ protects against chromosomal instability and tumorigenesis. The polymerase acts by binding directly the 2 ends of resected double-strand breaks, allowing microhomologous sequences in the overhangs to form base pairs. It then extends each strand from the base-paired region using the opposing overhang as a template. Requires partially resected DNA containing 2 to 6 base pairs of microhomology to perform MMEJ. The polymerase lacks proofreading activity and is highly promiscuous: unlike most polymerases, promotes extension of ssDNA and partial ssDNA (pssDNA) substrates. When the ends of a break do not contain terminal microhomology must identify embedded complementary sequences through a scanning step. Also acts as a DNA helicase, promoting dissociation of the replication protein A complex (RPA/RP-A), composed of RPA1, RPA2 and RPA3, from resected double-strand breaks to allow their annealing and subsequent joining by MMEJ. Removal of RPA/RP-A complex proteins prevents RAD51 accumulation at resected ends, thereby inhibiting homology-recombination repair (HR) pathway. Also shows RNA-directed DNA polymerase activity to mediate DNA repair in vitro; however this activity needs additional evidence in vivo. May also have lyase activity. Involved in somatic hypermutation of immunoglobulin genes, a process that requires the activity of DNA polymerases to ultimately introduce mutations at both A/T and C/G base pairs. POLQ-mediated end joining activity is involved in random integration of exogenous DNA hampers. The sequence is that of DNA polymerase theta from Homo sapiens (Human).